The following is a 235-amino-acid chain: Glutathione S-transferase 1 (235 aa).

Residues 36 to 113 (EKYTLTYFNG…LLGGRFGLLG (78 aa)) enclose the GST N-terminal domain. Residues Tyr42, Trp73, Lys77, Val85, and 97–98 (ES) each bind glutathione. The region spanning 115–235 (NDWEEAKIMA…WIKKRPKTYF (121 aa)) is the GST C-terminal domain.

Belongs to the GST superfamily. As to quaternary structure, homodimer.

It catalyses the reaction RX + glutathione = an S-substituted glutathione + a halide anion + H(+). The chain is Glutathione S-transferase 1 (GST1) from Onchocerca volvulus.